We begin with the raw amino-acid sequence, 129 residues long: MRITQGCFSFLPDLTDEQITAQVEYCLGRGWAIGVEYTDDPHPRNTYWEMWGNPMFDLRDAKGVMMEVEDCRKAHPQDYIRLNAFDSSRGLETVTMSFIVNRPENEPSLRMTRTESDGRSQHYTWETQR.

Positions 104 to 120 (ENEPSLRMTRTESDGRS) are enriched in basic and acidic residues. Residues 104 to 129 (ENEPSLRMTRTESDGRSQHYTWETQR) are disordered.

The protein belongs to the RuBisCO small chain family. As to quaternary structure, heterohexadecamer of 8 large and 8 small subunits.

Its function is as follows. RuBisCO catalyzes two reactions: the carboxylation of D-ribulose 1,5-bisphosphate, the primary event in carbon dioxide fixation, as well as the oxidative fragmentation of the pentose substrate. Both reactions occur simultaneously and in competition at the same active site. Although the small subunit is not catalytic it is essential for maximal activity. The polypeptide is Ribulose bisphosphate carboxylase small subunit (Sinorhizobium medicae (strain WSM419) (Ensifer medicae)).